We begin with the raw amino-acid sequence, 192 residues long: Phosphoheptose isomerase (192 aa).

The SIS domain maps to Leu-37–Lys-192. Asn-52 to Gly-54 serves as a coordination point for substrate. Residues His-61 and Glu-65 each coordinate Zn(2+). Residues Glu-65, Asn-93–Asp-94, Ser-119–Ser-121, Ser-124, and Gln-172 contribute to the substrate site. The Zn(2+) site is built by Gln-172 and His-180.

It belongs to the SIS family. GmhA subfamily. Homotetramer. Zn(2+) serves as cofactor.

The protein resides in the cytoplasm. The catalysed reaction is 2 D-sedoheptulose 7-phosphate = D-glycero-alpha-D-manno-heptose 7-phosphate + D-glycero-beta-D-manno-heptose 7-phosphate. It participates in carbohydrate biosynthesis; D-glycero-D-manno-heptose 7-phosphate biosynthesis; D-glycero-alpha-D-manno-heptose 7-phosphate and D-glycero-beta-D-manno-heptose 7-phosphate from sedoheptulose 7-phosphate: step 1/1. In terms of biological role, catalyzes the isomerization of sedoheptulose 7-phosphate in D-glycero-D-manno-heptose 7-phosphate. The protein is Phosphoheptose isomerase of Escherichia fergusonii (strain ATCC 35469 / DSM 13698 / CCUG 18766 / IAM 14443 / JCM 21226 / LMG 7866 / NBRC 102419 / NCTC 12128 / CDC 0568-73).